The chain runs to 398 residues: DNA replication and repair protein RecF (398 aa).

Gly-30–Thr-37 is a binding site for ATP.

The protein belongs to the RecF family.

Its subcellular location is the cytoplasm. The RecF protein is involved in DNA metabolism; it is required for DNA replication and normal SOS inducibility. RecF binds preferentially to single-stranded, linear DNA. It also seems to bind ATP. The chain is DNA replication and repair protein RecF from Renibacterium salmoninarum (strain ATCC 33209 / DSM 20767 / JCM 11484 / NBRC 15589 / NCIMB 2235).